The primary structure comprises 64 residues: Putative neurotoxin 6 (64 aa).

The first 24 residues, 1 to 24, serve as a signal peptide directing secretion; sequence MKNKFAALVITLFVLVLAIDNVTT.

The protein belongs to the scolopendra neurotoxin 6 family. Contains 3 disulfide bonds. Expressed by the venom gland.

The protein localises to the secreted. The polypeptide is Putative neurotoxin 6 (Scolopendra mutilans (Chinese red-headed centipede)).